The following is a 232-amino-acid chain: Small ribosomal subunit protein uS3 (232 aa).

The KH type-2 domain maps to 39 to 107 (VRQFLTKELS…PAQINIAEVR (69 aa)).

This sequence belongs to the universal ribosomal protein uS3 family. As to quaternary structure, part of the 30S ribosomal subunit. Forms a tight complex with proteins S10 and S14.

Binds the lower part of the 30S subunit head. Binds mRNA in the 70S ribosome, positioning it for translation. This Sodalis glossinidius (strain morsitans) protein is Small ribosomal subunit protein uS3.